The primary structure comprises 23 residues: Septenin 2 (23 aa).

Expressed in skin glands.

The protein localises to the secreted. May act as an antimicrobial peptide. This chain is Septenin 2, found in Osteopilus septentrionalis (Cuban treefrog).